A 529-amino-acid polypeptide reads, in one-letter code: Peptide chain release factor 3 (529 aa).

Residues 11-280 (ARRRTFAIIS…GLVEWAPSPM (270 aa)) form the tr-type G domain. GTP-binding positions include 20–27 (SHPDAGKT), 88–92 (DTPGH), and 142–145 (NKLD).

The protein belongs to the TRAFAC class translation factor GTPase superfamily. Classic translation factor GTPase family. PrfC subfamily.

Its subcellular location is the cytoplasm. Increases the formation of ribosomal termination complexes and stimulates activities of RF-1 and RF-2. It binds guanine nucleotides and has strong preference for UGA stop codons. It may interact directly with the ribosome. The stimulation of RF-1 and RF-2 is significantly reduced by GTP and GDP, but not by GMP. The sequence is that of Peptide chain release factor 3 from Erwinia tasmaniensis (strain DSM 17950 / CFBP 7177 / CIP 109463 / NCPPB 4357 / Et1/99).